We begin with the raw amino-acid sequence, 361 residues long: tRNA-specific 2-thiouridylase MnmA (361 aa).

Residues 10-17 (GMSGGVDS) and Met36 each bind ATP. Cys104 serves as the catalytic Nucleophile. A disulfide bridge links Cys104 with Cys202. Gly128 contacts ATP. The interval 152–154 (KDQ) is interaction with tRNA. The active-site Cysteine persulfide intermediate is Cys202. The tract at residues 308 to 309 (RY) is interaction with tRNA.

This sequence belongs to the MnmA/TRMU family.

It localises to the cytoplasm. The enzyme catalyses S-sulfanyl-L-cysteinyl-[protein] + uridine(34) in tRNA + AH2 + ATP = 2-thiouridine(34) in tRNA + L-cysteinyl-[protein] + A + AMP + diphosphate + H(+). Functionally, catalyzes the 2-thiolation of uridine at the wobble position (U34) of tRNA, leading to the formation of s(2)U34. The sequence is that of tRNA-specific 2-thiouridylase MnmA from Clostridioides difficile (strain 630) (Peptoclostridium difficile).